Here is a 511-residue protein sequence, read N- to C-terminus: Lysine--tRNA ligase 2 (511 aa).

Positions 1 to 11 (MTMEINNTDPS) are enriched in polar residues. The tract at residues 1-21 (MTMEINNTDPSENMPLPDDVD) is disordered. Residues glutamate 421 and glutamate 428 each coordinate Mg(2+).

Belongs to the class-II aminoacyl-tRNA synthetase family. As to quaternary structure, homodimer. Requires Mg(2+) as cofactor.

It localises to the cytoplasm. The enzyme catalyses tRNA(Lys) + L-lysine + ATP = L-lysyl-tRNA(Lys) + AMP + diphosphate. The polypeptide is Lysine--tRNA ligase 2 (Methanosarcina acetivorans (strain ATCC 35395 / DSM 2834 / JCM 12185 / C2A)).